Here is a 342-residue protein sequence, read N- to C-terminus: Ribosomal RNA small subunit methyltransferase C (342 aa).

This sequence belongs to the methyltransferase superfamily. RsmC family. Monomer.

It localises to the cytoplasm. It catalyses the reaction guanosine(1207) in 16S rRNA + S-adenosyl-L-methionine = N(2)-methylguanosine(1207) in 16S rRNA + S-adenosyl-L-homocysteine + H(+). Functionally, specifically methylates the guanine in position 1207 of 16S rRNA in the 30S particle. The sequence is that of Ribosomal RNA small subunit methyltransferase C from Shewanella oneidensis (strain ATCC 700550 / JCM 31522 / CIP 106686 / LMG 19005 / NCIMB 14063 / MR-1).